The chain runs to 192 residues: CASP-like protein 2U1 (192 aa).

Over 1–11 (MASRKQGAREG) the chain is Cytoplasmic. The helical transmembrane segment at 12–32 (LWSMGVRLLTTLLCITSLILL) threads the bilayer. Residues 33 to 58 (LKAKQTVRRALGLGYIAQTVKYSDTS) are Extracellular-facing. Residues 59-79 (GFIYLVYINILVAAYGLIVFV) form a helical membrane-spanning segment. Residues 80-96 (SLIPSALGKSCSGKCSR) lie on the Cytoplasmic side of the membrane. The helical transmembrane segment at 97–117 (WTIFVLDQVFAYVLLSAVSAA) threads the bilayer. Over 118-145 (TEVLYLADKGMSKTQWEALCPTYGFFCH) the chain is Extracellular. The chain crosses the membrane as a helical span at residues 146-166 (MVSASVAIGSVAVVLLAVLSV). Topologically, residues 167-192 (SSAQSLFHNFYTRALYTTKMRHSSLT) are cytoplasmic.

The protein belongs to the Casparian strip membrane proteins (CASP) family. In terms of assembly, homodimer and heterodimers.

It is found in the cell membrane. This Adiantum capillus-veneris (Maidenhair fern) protein is CASP-like protein 2U1.